The primary structure comprises 966 residues: MSHDPMNPHLQSSADPSRSSEEIRQDFLQFFQAKGHEVVPSASLVPDGDGTLLFTNAGMNQFKDVFLGTGQRPYSRAVDTQKCLRVSGKHNDLEEVGHDTYHHTFFEMLGNWSFGDYFKAEAIRWAWELLVERWGLAPDRLYATVHEGDDDFGLSADAEAYDLWLSETPLPEERVLYEPSKENFWMMGDTGPCGPCSELHVDLRPPEARQETPGRELVNVDHPQVMELWNLVFIQYNAQTDGSLEPLDDQHVDTGMGFERMVAVLQGKESTYDTDLFAPLLQAMADRSPREEIRGYDDLHIEDDDEHEQVRIALRVVADHIRAIAFAISDGVMPSNEGRGYVIRRILRRAVRYGYQTLELEEPFLHRLVDPLIEKMGGPFDGLAEQQEFIEQAIRSEEESFLETLGTGIEFFERVVPHVTGFQDTDGEESDRLLGALREDAQAMDLLEKAYVDTDDENDILHSFARTARGGTLPGQIAFLLHDTYGFPIDLTRLMARERDLDVDMEGYETLMDRQQERARAASDFAVDQSDVQAWQSVSPGEASVFVGYDRAVVPDAEVRAVRVVETGDTQQYEVELSRTPFYAEAGGQVGDTGTLRFGDESVQVLDTQREGERIAHTVDTLPEPLDGPVEAAVDAERRNHIRAHHTATHLMHAVLRETLGDHVQQKGSLVAPDRLRFDFSHFDAVDEDTLRHIERRVNTAIQQNIPKQEARDVPIDEALDRGATALFDEQYGDRVRVITFDPDFSMELCGGTHVDATGEIGLFRFLSEGSVASGVRRVEAVAGKAALEHVESELETLTRARRQFRSLHTSLPEAIAEVQEERDRLAGEVDQLRRGQLSDQLDTFIAENAASVDGITVVTGRLDRASMDDLQELGQQFRDKLGEGAVGVLGSVGEDGEKAYVVATVADDLVDDGALRAGDLVGTLGDRLGGGGGGRPSLASAGGRDPEALDTVLDGVPALVRDRLE.

Zn(2+) is bound by residues histidine 646, histidine 650, cysteine 750, and histidine 754. Residues 927–949 form a disordered region; sequence DRLGGGGGGRPSLASAGGRDPEA.

Belongs to the class-II aminoacyl-tRNA synthetase family. Zn(2+) is required as a cofactor.

The protein localises to the cytoplasm. The catalysed reaction is tRNA(Ala) + L-alanine + ATP = L-alanyl-tRNA(Ala) + AMP + diphosphate. Catalyzes the attachment of alanine to tRNA(Ala) in a two-step reaction: alanine is first activated by ATP to form Ala-AMP and then transferred to the acceptor end of tRNA(Ala). Also edits incorrectly charged Ser-tRNA(Ala) and Gly-tRNA(Ala) via its editing domain. In Salinibacter ruber (strain DSM 13855 / M31), this protein is Alanine--tRNA ligase.